A 341-amino-acid polypeptide reads, in one-letter code: Ras association domain-containing protein 6 (341 aa).

At Ser-155 the chain carries Phosphoserine. The 89-residue stretch at 190–278 folds into the Ras-associating domain; sequence YDHETSIFTP…ARIFLMDKDA (89 aa). Residues 285 to 332 form the SARAH domain; the sequence is VAPYINFHFSFLKSILQRLDEEEKMEIERIMAKFNTERAFILKCLQSK.

Interacts with MOAP1. Interaction with activated KRAS is still a matter of debate.

In terms of biological role, involved in the induction of apoptosis. May act as a Ras effector protein. May suppress the serum-induced basal levels of NF-kappa-B. The polypeptide is Ras association domain-containing protein 6 (Rassf6) (Rattus norvegicus (Rat)).